The following is a 595-amino-acid chain: Glycine betaine transporter BetP (595 aa).

Residues 1–59 (MTTSDPNPKPIVEDAQPEQITATEELAGLLENPTNLEGKLADAEEEIILEGEDTQASLN) are Cytoplasmic-facing. Residues 60 to 80 (WSVIVPALVIVLATVVWGIGF) form a helical membrane-spanning segment. At 81-98 (KDSFTNFASSALSAVVDN) the chain is on the periplasmic side. The helical transmembrane segment at 99 to 119 (LGWAFILFGTVFVFFIVVIAA) threads the bilayer. The Cytoplasmic segment spans residues 120–137 (SKFGTIRLGRIDEAPEFR). Residues 138–158 (TVSWISMMFAAGMGIGLMFYG) form a helical membrane-spanning segment. Residues Ala-147, Ala-148, and Met-150 each coordinate Na(+). 152-153 (IG) serves as a coordination point for glycine betaine. Residues 159–185 (TTEPLTFYRNGVPGHDEHNVGVAMSTT) lie on the Periplasmic side of the membrane. The helical transmembrane segment at 186-206 (MFHWTLHPWAIYAIVGLAIAY) threads the bilayer. Over 207 to 236 (STFRVGRKQLLSSAFVPLIGEKGAEGWLGK) the chain is Cytoplasmic. A helical transmembrane segment spans residues 237–257 (LIDILAIIATVFGTACSLGLG). Ser-253 is a binding site for glycine betaine. The Periplasmic segment spans residues 258–276 (ALQIGAGLSAANIIEDPSD). Residues 277 to 296 (WTIVGIVSVLTLAFIFSAIS) form a helical membrane-spanning segment. Over 297-299 (GVG) the chain is Cytoplasmic. The chain crosses the membrane as a helical span at residues 300 to 323 (KGIQYLSNANMVLAALLAIFVFVV). The Na(+) site is built by Ser-306 and Met-310. Over 324 to 365 (GPTVSILNLLPGSIGNYLSNFFQMAGRTAMSADGTAGEWLGS) the chain is Periplasmic. Residues 366-386 (WTIFYWAWWISWSPFVGMFLA) traverse the membrane as a helical segment. 373-377 (WWISW) is a glycine betaine binding site. The Cytoplasmic segment spans residues 387-396 (RISRGRSIRE). The chain crosses the membrane as a helical span at residues 397 to 417 (FILGVLLVPAGVSTVWFSIFG). At 418–451 (GTAIVFEQNGESIWGDGAAEEQLFGLLHALPGGQ) the chain is on the periplasmic side. The chain crosses the membrane as a helical span at residues 452-476 (IMGIIAMILLGTFFITSADSASTVM). Over 477 to 489 (GTMSQHGQLEANK) the chain is Cytoplasmic. The helical transmembrane segment at 490-510 (WVTAAWGVATAAIGLTLLLSG) threads the bilayer. Topologically, residues 511–520 (GDNALSNLQN) are periplasmic. The chain crosses the membrane as a helical span at residues 521–541 (VTIVAATPFLFVVIGLMFALV). Over 542–595 (KDLSNDVIYLEYREQQRFNARLARERRVHNEHRKRELAAKRRRERKASGAGKRR) the chain is Cytoplasmic. A disordered region spans residues 570 to 595 (HNEHRKRELAAKRRRERKASGAGKRR). A compositionally biased stretch (basic residues) spans 581–595 (KRRRERKASGAGKRR).

Belongs to the BCCT transporter (TC 2.A.15) family. Homotrimer. The monomer can accumulate glycine betaine, but trimerization is required to properly respond to osmotic stress.

It is found in the cell inner membrane. Uptake is activated by hyperosmotic stress. Osmoresponsive activation is triggered by a change in the internal K(+) concentration. In addition, shows a pronounced chill stimulation, at temperatures around 10 degrees Celsius. Chill activation may be influenced by the membrane lipid composition. Uptake is completely abolished by the uncoupler CCCP, and to a different extent by the ionophores valinomycin and nigericin. In terms of biological role, involved in response to osmotic stress. High-affinity glycine betaine-specific uptake system, which couples the uptake of glycine betaine to the symport of two Na(+) ions. Transport is driven both by the Na(+) gradient and by the electrical potential. In addition, functions both as an osmosensor and as an osmoregulator that transduces signal to the catalytic part of the carrier protein, which adapts its activity to the extent of osmotic stress. The polypeptide is Glycine betaine transporter BetP (Corynebacterium glutamicum (strain ATCC 13032 / DSM 20300 / JCM 1318 / BCRC 11384 / CCUG 27702 / LMG 3730 / NBRC 12168 / NCIMB 10025 / NRRL B-2784 / 534)).